The chain runs to 168 residues: ATP synthase subunit b, chloroplastic (168 aa).

A helical membrane pass occupies residues 20–37 (LNLAVVLPIVFTLGRDTL).

This sequence belongs to the ATPase B chain family. As to quaternary structure, F-type ATPases have 2 components, F(1) - the catalytic core - and F(0) - the membrane proton channel. F(1) has five subunits: alpha(3), beta(3), gamma(1), delta(1), epsilon(1). F(0) has four main subunits: a(1), b(1), b'(1) and c(10-14). The alpha and beta chains form an alternating ring which encloses part of the gamma chain. F(1) is attached to F(0) by a central stalk formed by the gamma and epsilon chains, while a peripheral stalk is formed by the delta, b and b' chains.

It is found in the plastid. The protein resides in the chloroplast thylakoid membrane. F(1)F(0) ATP synthase produces ATP from ADP in the presence of a proton or sodium gradient. F-type ATPases consist of two structural domains, F(1) containing the extramembraneous catalytic core and F(0) containing the membrane proton channel, linked together by a central stalk and a peripheral stalk. During catalysis, ATP synthesis in the catalytic domain of F(1) is coupled via a rotary mechanism of the central stalk subunits to proton translocation. In terms of biological role, component of the F(0) channel, it forms part of the peripheral stalk, linking F(1) to F(0). This is ATP synthase subunit b, chloroplastic from Ostreococcus tauri.